A 799-amino-acid polypeptide reads, in one-letter code: Elongation factor G, mitochondrial (799 aa).

The transit peptide at 1–34 (MRCPSLTRLPYRAVSGLPRSVVRLQSQNFLTRRC) directs the protein to the mitochondrion. The tr-type G domain occupies 97-384 (SRVRNIGIAA…GVVDYLPNPA (288 aa)). Residues 106 to 113 (AHIDSGKT), 182 to 186 (DTPGH), and 236 to 239 (NKMD) contribute to the GTP site.

Belongs to the TRAFAC class translation factor GTPase superfamily. Classic translation factor GTPase family. EF-G/EF-2 subfamily.

It localises to the mitochondrion. It participates in protein biosynthesis; polypeptide chain elongation. Mitochondrial GTPase that catalyzes the GTP-dependent ribosomal translocation step during translation elongation. During this step, the ribosome changes from the pre-translocational (PRE) to the post-translocational (POST) state as the newly formed A-site-bound peptidyl-tRNA and P-site-bound deacylated tRNA move to the P and E sites, respectively. Catalyzes the coordinated movement of the two tRNA molecules, the mRNA and conformational changes in the ribosome. This chain is Elongation factor G, mitochondrial (mef1), found in Aspergillus flavus (strain ATCC 200026 / FGSC A1120 / IAM 13836 / NRRL 3357 / JCM 12722 / SRRC 167).